The following is a 165-amino-acid chain: 2-C-methyl-D-erythritol 2,4-cyclodiphosphate synthase (165 aa).

Residues D8 and H10 each contribute to the a divalent metal cation site. 4-CDP-2-C-methyl-D-erythritol 2-phosphate-binding positions include 8 to 10 (DVH) and 34 to 35 (HS). H42 contributes to the a divalent metal cation binding site. 4-CDP-2-C-methyl-D-erythritol 2-phosphate-binding positions include 56–58 (DIG), 61–65 (FPDTD), 100–106 (AQAPKMA), 132–135 (TTTE), F139, and R142.

Belongs to the IspF family. In terms of assembly, homotrimer. A divalent metal cation is required as a cofactor.

The catalysed reaction is 4-CDP-2-C-methyl-D-erythritol 2-phosphate = 2-C-methyl-D-erythritol 2,4-cyclic diphosphate + CMP. Its pathway is isoprenoid biosynthesis; isopentenyl diphosphate biosynthesis via DXP pathway; isopentenyl diphosphate from 1-deoxy-D-xylulose 5-phosphate: step 4/6. In terms of biological role, involved in the biosynthesis of isopentenyl diphosphate (IPP) and dimethylallyl diphosphate (DMAPP), two major building blocks of isoprenoid compounds. Catalyzes the conversion of 4-diphosphocytidyl-2-C-methyl-D-erythritol 2-phosphate (CDP-ME2P) to 2-C-methyl-D-erythritol 2,4-cyclodiphosphate (ME-CPP) with a corresponding release of cytidine 5-monophosphate (CMP). This chain is 2-C-methyl-D-erythritol 2,4-cyclodiphosphate synthase, found in Pectobacterium atrosepticum (strain SCRI 1043 / ATCC BAA-672) (Erwinia carotovora subsp. atroseptica).